We begin with the raw amino-acid sequence, 472 residues long: Nuclear hormone receptor family member nhr-2 (472 aa).

4 stretches are compositionally biased toward polar residues: residues 57–83 (TATN…LSQI), 90–112 (NDTI…HNQP), 138–147 (LSSTQSSPDN), and 159–171 (VRRN…SAST). Disordered stretches follow at residues 57–112 (TATN…HNQP) and 138–184 (LSST…RTNT). The nuclear receptor DNA-binding region spans 215–297 (KDRCMVCGDN…VGMNRDNVRV (83 aa)). 2 NR C4-type zinc fingers span residues 218-238 (CMVC…CEGC) and 267-285 (CAAN…FAKC).

It belongs to the nuclear hormone receptor family.

The protein localises to the nucleus. Its function is as follows. Orphan nuclear receptor. This is Nuclear hormone receptor family member nhr-2 (nhr-2) from Caenorhabditis elegans.